The sequence spans 142 residues: Large ribosomal subunit protein uL23 (142 aa).

Lys61 is covalently cross-linked (Glycyl lysine isopeptide (Lys-Gly) (interchain with G-Cter in SUMO)).

It belongs to the universal ribosomal protein uL23 family. Component of the large ribosomal subunit (LSU). Mature yeast ribosomes consist of a small (40S) and a large (60S) subunit. The 40S small subunit contains 1 molecule of ribosomal RNA (18S rRNA) and 33 different proteins (encoded by 57 genes). The large 60S subunit contains 3 rRNA molecules (25S, 5.8S and 5S rRNA) and 46 different proteins (encoded by 81 genes). uL23 is associated with the polypeptide exit tunnel.

The protein localises to the cytoplasm. Component of the ribosome, a large ribonucleoprotein complex responsible for the synthesis of proteins in the cell. The small ribosomal subunit (SSU) binds messenger RNAs (mRNAs) and translates the encoded message by selecting cognate aminoacyl-transfer RNA (tRNA) molecules. The large subunit (LSU) contains the ribosomal catalytic site termed the peptidyl transferase center (PTC), which catalyzes the formation of peptide bonds, thereby polymerizing the amino acids delivered by tRNAs into a polypeptide chain. The nascent polypeptides leave the ribosome through a tunnel in the LSU and interact with protein factors that function in enzymatic processing, targeting, and the membrane insertion of nascent chains at the exit of the ribosomal tunnel. uL23 is a major component of the universal docking site for these factors at the polypeptide exit tunnel. The polypeptide is Large ribosomal subunit protein uL23 (Saccharomyces cerevisiae (strain ATCC 204508 / S288c) (Baker's yeast)).